Reading from the N-terminus, the 122-residue chain is Large ribosomal subunit protein uL14 (122 aa).

It belongs to the universal ribosomal protein uL14 family. As to quaternary structure, part of the 50S ribosomal subunit. Forms a cluster with proteins L3 and L19. In the 70S ribosome, L14 and L19 interact and together make contacts with the 16S rRNA in bridges B5 and B8.

In terms of biological role, binds to 23S rRNA. Forms part of two intersubunit bridges in the 70S ribosome. The chain is Large ribosomal subunit protein uL14 from Verminephrobacter eiseniae (strain EF01-2).